A 124-amino-acid chain; its full sequence is Fluoride-specific ion channel FluC 1 (124 aa).

The next 4 membrane-spanning stretches (helical) occupy residues 7 to 27 (ALTLAAAGAGSVLRYLLGGWV), 35 to 55 (FPWGTLAVNALGCLGLGLLQG), 63 to 83 (LLLVLGSGLLAGFTTFSTLML), and 101 to 121 (IVGTLALGLFALSAGARAGAW).

It belongs to the fluoride channel Fluc/FEX (TC 1.A.43) family.

It is found in the cell membrane. The catalysed reaction is fluoride(in) = fluoride(out). Fluoride-specific ion channel. Important for reducing fluoride concentration in the cell, thus reducing its toxicity. This Rubrobacter xylanophilus (strain DSM 9941 / JCM 11954 / NBRC 16129 / PRD-1) protein is Fluoride-specific ion channel FluC 1.